The sequence spans 207 residues: Large ribosomal subunit protein bL25 (207 aa).

This sequence belongs to the bacterial ribosomal protein bL25 family. CTC subfamily. In terms of assembly, part of the 50S ribosomal subunit; part of the 5S rRNA/L5/L18/L25 subcomplex. Contacts the 5S rRNA. Binds to the 5S rRNA independently of L5 and L18.

Its function is as follows. This is one of the proteins that binds to the 5S RNA in the ribosome where it forms part of the central protuberance. This Bordetella petrii (strain ATCC BAA-461 / DSM 12804 / CCUG 43448) protein is Large ribosomal subunit protein bL25.